The following is a 161-amino-acid chain: Large ribosomal subunit protein bL21m (161 aa).

The transit peptide at Met-1–Ser-35 directs the protein to the mitochondrion.

The protein belongs to the bacterial ribosomal protein bL21 family. Component of the mitochondrial large ribosomal subunit (mt-LSU). Mature yeast 74S mitochondrial ribosomes consist of a small (37S) and a large (54S) subunit. The 37S small subunit contains a 15S ribosomal RNA (15S mt-rRNA) and 34 different proteins. The 54S large subunit contains a 21S rRNA (21S mt-rRNA) and 46 different proteins.

The protein resides in the mitochondrion. Its function is as follows. Component of the mitochondrial ribosome (mitoribosome), a dedicated translation machinery responsible for the synthesis of mitochondrial genome-encoded proteins, including at least some of the essential transmembrane subunits of the mitochondrial respiratory chain. The mitoribosomes are attached to the mitochondrial inner membrane and translation products are cotranslationally integrated into the membrane. This Saccharomyces cerevisiae (strain ATCC 204508 / S288c) (Baker's yeast) protein is Large ribosomal subunit protein bL21m (MRPL49).